A 487-amino-acid polypeptide reads, in one-letter code: Betaine aldehyde dehydrogenase (487 aa).

Residues Ile-27 and Asp-93 each contribute to the K(+) site. 149-151 (GAW) serves as a coordination point for NAD(+). Lys-161 (charge relay system) is an active-site residue. Residues 175–178 (KPSE) and 228–231 (SVPT) each bind NAD(+). Residue Leu-243 participates in K(+) binding. The Proton acceptor role is filled by Glu-249. NAD(+) contacts are provided by Gly-251, Cys-283, and Glu-384. Residue Cys-283 is the Nucleophile of the active site. Cysteine sulfenic acid (-SOH) is present on Cys-283. 2 residues coordinate K(+): Lys-454 and Gly-457. Residue Glu-461 is the Charge relay system of the active site.

Belongs to the aldehyde dehydrogenase family. In terms of assembly, dimer of dimers. The cofactor is K(+).

It carries out the reaction betaine aldehyde + NAD(+) + H2O = glycine betaine + NADH + 2 H(+). The protein operates within amine and polyamine biosynthesis; betaine biosynthesis via choline pathway; betaine from betaine aldehyde: step 1/1. In terms of biological role, involved in the biosynthesis of the osmoprotectant glycine betaine. Catalyzes the irreversible oxidation of betaine aldehyde to the corresponding acid. This is Betaine aldehyde dehydrogenase from Brucella anthropi (strain ATCC 49188 / DSM 6882 / CCUG 24695 / JCM 21032 / LMG 3331 / NBRC 15819 / NCTC 12168 / Alc 37) (Ochrobactrum anthropi).